We begin with the raw amino-acid sequence, 875 residues long: MVANGHFASNGEGQDSGSYEHGVQVIDEDKEFNPNVSRYLTYENVTPAGFNYHLISVFGSQSTGKSTLLNHLFGTHFSVMSETERRQTTKGIWLSKNKRVESSKDRDPQMKMADNILVMDVEGTDGRERGEDQDFERKSALFALATSEVLIVNIWEHQVGLYQGANMGLLKTVFEVNLELFLKDNKSTPRSLLFFVIRDFVGTTPLQNLQNTLLQDLNRIWSSLSKPAGLENSTINDYFDFAFAGLPHKNFQPEKFVDEVQKLSTRFRNAHRDPNNVDSRGTGSIEGGIFLPEYHRRIPADGFAVYAEGVWDQIVNNKDLDLPTQQELLAQFRCDEISREALVAFDEAISPFESKQAEAVQAGSPQVLGGLGPVMRNARMNAVKNFDAEASRYHKRVYQMKKSELEEKIDTRLKALFLGQLNAAHRSGVQDFSESVSAAVKAGQKRGASYDFAEIVSRERQLAIEKFEKEARSTLVEDAPWSNYQQELSLYQKDLERISGQLRRDEMRRLATRVERWVRSRLGESVDLEFNALGSGRGGSGAPEFGDKPSENTIWDRVWTIFVDTVLDAERRFTERASSFDASLDEVDVGLWRLRRKSWGVLRAKIEEEVMEGNLLLKLRENFEDKFRYDDAGVPRIWRPTDDIESVYTQARESTLTLIPLLARFRLAETNAPPPLDKWIGHTPSSATPADEEDLTPIGGVDEDEGKSLEEEMTMIGEAKKQDLIVRFKKTADGVYVEAKRSAIGGITQVPLYFYGLLLALGWNEIMAVLRNPAYFFLLFVCAIGAYVTYQLNLWGPIIKMTEAASHQALEEGKRRLRDFLEASDTGRQAMAMSGARNATEEHEMSNLNRKSGERGGQKYRGEDVADDDDVDDDF.

At 1–749 (MVANGHFASN…KRSAIGGITQ (749 aa)) the chain is on the cytoplasmic side. Residues 49 to 307 (GFNYHLISVF…IPADGFAVYA (259 aa)) enclose the GB1/RHD3-type G domain. 59-66 (GSQSTGKS) is a GTP binding site. Residues 482–506 (SNYQQELSLYQKDLERISGQLRRDE) are a coiled coil. Residues 676-704 (LDKWIGHTPSSATPADEEDLTPIGGVDED) are disordered. Acidic residues predominate over residues 690–704 (ADEEDLTPIGGVDED). Residues 750 to 770 (VPLYFYGLLLALGWNEIMAVL) traverse the membrane as a helical segment. Residues 771–773 (RNP) are Lumenal-facing. The chain crosses the membrane as a helical span at residues 774-794 (AYFFLLFVCAIGAYVTYQLNL). Residues 795-875 (WGPIIKMTEA…ADDDDVDDDF (81 aa)) are Cytoplasmic-facing. A disordered region spans residues 831–875 (MAMSGARNATEEHEMSNLNRKSGERGGQKYRGEDVADDDDVDDDF). A compositionally biased stretch (basic and acidic residues) spans 839-864 (ATEEHEMSNLNRKSGERGGQKYRGED). Positions 865–875 (VADDDDVDDDF) are enriched in acidic residues.

Belongs to the TRAFAC class dynamin-like GTPase superfamily. GB1/RHD3 GTPase family. RHD3 subfamily.

It localises to the endoplasmic reticulum membrane. Its function is as follows. Cooperates with the reticulon proteins and tubule-shaping DP1 family proteins to generate and maintain the structure of the tubular endoplasmic reticulum network. Has GTPase activity, which is required for its function in ER organization. The sequence is that of Protein SEY1 from Ajellomyces dermatitidis (strain ER-3 / ATCC MYA-2586) (Blastomyces dermatitidis).